The chain runs to 219 residues: Occludin/ELL domain-containing protein 1 (219 aa).

The disordered stretch occupies residues 1 to 110 (MQIHAGPASR…DYELKYPPVT (110 aa)). Low complexity predominate over residues 17 to 43 (LARLSGPEATCNSRPAARGRQRAAAPR). The span at 72–93 (VFADELRPREPLHPEKHPRDLG) shows a compositional bias: basic and acidic residues. An OCEL domain is found at 100–210 (PDYELKYPPV…QIRKFDDQQD (111 aa)).

This sequence belongs to the ELL/occludin family.

The protein is Occludin/ELL domain-containing protein 1 (Ocel1) of Mus musculus (Mouse).